Reading from the N-terminus, the 104-residue chain is Large ribosomal subunit protein uL24 (104 aa).

This sequence belongs to the universal ribosomal protein uL24 family. Part of the 50S ribosomal subunit.

One of two assembly initiator proteins, it binds directly to the 5'-end of the 23S rRNA, where it nucleates assembly of the 50S subunit. In terms of biological role, one of the proteins that surrounds the polypeptide exit tunnel on the outside of the subunit. This is Large ribosomal subunit protein uL24 from Caulobacter sp. (strain K31).